The chain runs to 219 residues: 2-hydroxy-3-keto-5-methylthiopentenyl-1-phosphate phosphatase (219 aa).

Belongs to the HAD-like hydrolase superfamily. MtnX family.

The catalysed reaction is 2-hydroxy-5-methylsulfanyl-3-oxopent-1-enyl phosphate + H2O = 1,2-dihydroxy-5-(methylsulfanyl)pent-1-en-3-one + phosphate. It participates in amino-acid biosynthesis; L-methionine biosynthesis via salvage pathway; L-methionine from S-methyl-5-thio-alpha-D-ribose 1-phosphate: step 4/6. Functionally, dephosphorylates 2-hydroxy-3-keto-5-methylthiopentenyl-1-phosphate (HK-MTPenyl-1-P) yielding 1,2-dihydroxy-3-keto-5-methylthiopentene (DHK-MTPene). The chain is 2-hydroxy-3-keto-5-methylthiopentenyl-1-phosphate phosphatase from Bacillus cereus (strain ATCC 14579 / DSM 31 / CCUG 7414 / JCM 2152 / NBRC 15305 / NCIMB 9373 / NCTC 2599 / NRRL B-3711).